Reading from the N-terminus, the 1181-residue chain is Sodium/potassium/calcium exchanger 1 (1181 aa).

Over 1-419 (MGKLIRMGTQ…DLFSVEDRRQ (419 aa)) the chain is Extracellular. 3 disordered regions span residues 107–232 (AMED…TSLK), 255–276 (SLVG…STTP), and 300–323 (STPA…GTST). A compositionally biased stretch (polar residues) spans 124–136 (SLKNNYSPTTAGT). A glycan (N-linked (GlcNAc...) asparagine) is linked at asparagine 271. Residues 301-311 (TPATTEGSTAA) show a composition bias toward polar residues. Residues 420-440 (GWVVLHIFGMTYVFVALAIVC) traverse the membrane as a helical segment. At 441 to 464 (DEYFVPALGVITDKLQISEDVAGA) the chain is on the cytoplasmic side. The stretch at 461–501 (VAGATFMAAGGSAPELFTSLIGVFISHSNVGIGTIVGSAVF) is one Alpha-1 repeat. The helical transmembrane segment at 465–485 (TFMAAGGSAPELFTSLIGVFI) threads the bilayer. Topologically, residues 486 to 491 (SHSNVG) are extracellular. The chain crosses the membrane as a helical span at residues 492–512 (IGTIVGSAVFNILFVIGTCAL). Topologically, residues 513 to 519 (FSREILN) are cytoplasmic. A helical transmembrane segment spans residues 520-544 (LTWWPLFRDVSFYILDLSMLIVFFL). Topologically, residues 545–552 (DSLIAWWE) are extracellular. A helical transmembrane segment spans residues 553–569 (SLLLLLAYALYVFTMKW). Over 570-989 (NKQIERWVKE…SLEWPESRQK (420 aa)) the chain is Cytoplasmic. Positions 598-617 (PSDGAIEENEQQDNKKLKLP) are disordered. Serine 625 is subject to Phosphoserine. Residues 650-983 (GEARPSKDKQ…ESEEPLSLEW (334 aa)) are disordered. Position 690 is a phosphothreonine (threonine 690). The span at 701 to 715 (GDQEEDPGCQEDVDE) shows a compositional bias: acidic residues. A run of 14 repeats spans residues 730–741 (ETEAEGKKDEEG), 742–754 (ETEA…GQEE), 755–766 (ETETKGKEKQEG), 767–778 (ETESEGKDEQEG), 779–791 (ETEA…DHEG), 792–804 (ETEA…EHEG), 805–817 (ETEA…EQEG), 818–830 (ETEA…EQEG), 831–843 (ETEA…EHEV), 844–856 (ETEA…NHEG), 857–869 (ETEA…DHEG), 870–881 (ETEAEGNVEHQG), 882–893 (ETEAEGKVEHEG), and 894–905 (ETEAGEKDEHEG). Basic and acidic residues-rich tracts occupy residues 730 to 750 (ETEA…RKED), 757 to 775 (ETKG…GKDE), and 782 to 805 (AEGK…HEGE). The segment at 730 to 905 (ETEAEGKKDE…EAGEKDEHEG (176 aa)) is 14 X approximate tandem repeats. Positions 806–820 (TEAEGTEDEQEGETE) are enriched in acidic residues. The segment covering 834 to 906 (AEGKEVEHEV…AGEKDEHEGQ (73 aa)) has biased composition (basic and acidic residues). 2 stretches are compositionally biased toward acidic residues: residues 921–931 (GEAEANAEDQC) and 949–979 (GDSE…EEPL). Residues 990 to 1010 (QAIYLFLLPIVFPLWLTIPDV) traverse the membrane as a helical segment. The Extracellular segment spans residues 1011–1017 (RRQEARK). Residues 1018–1038 (FFVITFLGSIIWIAMFSYLMV) form a helical membrane-spanning segment. Topologically, residues 1039-1053 (WWAHQVGETIGISEE) are cytoplasmic. Residues 1054–1074 (IMGLTILAAGTSIPDLITSVI) traverse the membrane as a helical segment. Residues 1061–1092 (AAGTSIPDLITSVIVARKGLGDMAVSSSVGSN) form an Alpha-2 repeat. Residues 1075 to 1092 (VARKGLGDMAVSSSVGSN) are Extracellular-facing. The chain crosses the membrane as a helical span at residues 1093–1113 (IFDITVGLPVPWLLFSLINAL). The Cytoplasmic segment spans residues 1114–1121 (QPIPVSSN). Residues 1122-1142 (GLFCAIVLLFLMLLFVIFSIA) traverse the membrane as a helical segment. At 1143–1150 (SCKWRMNK) the chain is on the extracellular side. Residues 1151 to 1171 (ILGFTMFLLYFVFLVISVMLE) traverse the membrane as a helical segment. The Cytoplasmic segment spans residues 1172–1181 (DRIISCPVSV).

The protein belongs to the Ca(2+):cation antiporter (CaCA) (TC 2.A.19) family. SLC24A subfamily. In terms of processing, the uncleaved signal sequence is required for efficient membrane targeting and proper membrane integration and topology. As to expression, highly expressed in the eye.

It localises to the cell membrane. The enzyme catalyses Ca(2+)(out) + K(+)(out) + 4 Na(+)(in) = Ca(2+)(in) + K(+)(in) + 4 Na(+)(out). Calcium, potassium:sodium antiporter that transports 1 Ca(2+) and 1 K(+) in exchange for 4 Na(+). Critical component of the visual transduction cascade, controlling the calcium concentration of outer segments during light and darkness. Light causes a rapid lowering of cytosolic free calcium in the outer segment of both retinal rod and cone photoreceptors and the light-induced lowering of calcium is caused by extrusion via this protein which plays a key role in the process of light adaptation. In Rattus norvegicus (Rat), this protein is Sodium/potassium/calcium exchanger 1 (Slc24a1).